An 836-amino-acid chain; its full sequence is MSSEVKQLIVVAEGTAALGPYWQTIVSDYLEKIIRSFCGSELNGERNPVSTVELSLVIFNSHGSYCACLVQRSGWTRDVDIFLHWLSSIQFGGGGFNEVATAEGLAEALMMFSPPSGQAQPSNDLKRHCILITASNPHILPTPVYRPRLQNVERNENGDAQAESRLSDAETVASYFAKCSVSLSVVCPKQLPTIRALYNAGKPNQQSADLSIDTAKNTFYLVLISENFVEACAALSHSATNLPQTQSPVKVDRATVAPSIPVTGQPPAPVSSANGPIQNRQPVSVGPVPTATVKVEPSTVTSMAPVPSFPHIPAVARPATQAIPSIQTSSASPVSQDMVSNAENAPDIKPVVVSGMTPPLRTGPPGGANVNLLNNLSQVRQVMSSAALAGAASSVGQSAVAMHMSNMISTGMATSLPPSQTVFSTGQQGITSMAGSGALMGSAQTGQSPGPNNAFSPQTTSNVASNLGVSQPMQGMNQGSHSGAMMQGGISMNQNMMSGLGQGNVSSGTGGMMPTPGVGQQAQSGIQQLGGSNSSAPNMQLSQPSSGAMQTSQSKYVKVWEGNLSGQRQGQPVLITRLEGYRSASASDSLAANWPPTMQIVRLISQDHMNNKQYVGKADFLVFRAMSQHGFLGQLQDKKLCAVIQLPSQTLLLSVSDKACRLIGMLFPGDMVVFKPQIPNQQQQQQQQLHQQQQQQQQIQQQQQQQQHLQQQQMPQLQQQQQQHQQQQQQQHQLSQLQHHQQQQQQQQQQQQQHQLTQLQHHHQQQQQASPLNQMQQQTSPLNQMQQQTSPLNQMQQQQQPQQMVMGGQAFAQAPGRSQQGGGGGQPNMPGAGFMG.

Disordered stretches follow at residues 260 to 285, 435 to 466, 518 to 547, and 731 to 836; these read IPVT…PVSV, GSGA…VASN, VGQQ…PSSG, and QHQL…GFMG. 2 stretches are compositionally biased toward polar residues: residues 271-282 and 442-466; these read SSANGPIQNRQP and SAQT…VASN. Positions 680-761 form a coiled coil; sequence NQQQQQQQQL…QQHQLTQLQH (82 aa). 2 stretches are compositionally biased toward low complexity: residues 731–818 and 827–836; these read QHQL…PGRS and PNMPGAGFMG.

It belongs to the Mediator complex subunit 25 family. In terms of assembly, component of the Mediator complex. Interacts with the transcription factors BBX20, RAP2-2, ERF1B, ERF091, ERF095, ERF098, ERF109, HB29, PHL1, DREB2A, ABI5 and MYC2. Interacts with the E3 ubiquitin-protein ligases MBR1 and MBR2.

Its subcellular location is the nucleus. In terms of biological role, component of the Mediator complex, a coactivator involved in the regulated transcription of nearly all RNA polymerase II-dependent genes. Mediator functions as a bridge to convey information from gene-specific regulatory proteins to the basal RNA polymerase II transcription machinery. Mediator is recruited to promoters by direct interactions with regulatory proteins and serves as a scaffold for the assembly of a functional preinitiation complex with RNA polymerase II and the general transcription factors. Positive regulator of shade avoidance and of jasmonate signaling. Acts in repression of PhyB-mediated light signaling and regulates the expression of FLOWERING LOCUS T (FT) and of CONSTANS (CO). This Arabidopsis thaliana (Mouse-ear cress) protein is Mediator of RNA polymerase II transcription subunit 25 (MED25).